We begin with the raw amino-acid sequence, 309 residues long: Homoserine O-succinyltransferase (309 aa).

Residue cysteine 142 is the Acyl-thioester intermediate of the active site. Lysine 163 and serine 192 together coordinate substrate. Histidine 235 serves as the catalytic Proton acceptor. Glutamate 237 is a catalytic residue. Position 249 (arginine 249) interacts with substrate.

It belongs to the MetA family. As to quaternary structure, homodimer.

It is found in the cytoplasm. It carries out the reaction L-homoserine + succinyl-CoA = O-succinyl-L-homoserine + CoA. The protein operates within amino-acid biosynthesis; L-methionine biosynthesis via de novo pathway; O-succinyl-L-homoserine from L-homoserine: step 1/1. Functionally, transfers a succinyl group from succinyl-CoA to L-homoserine, forming succinyl-L-homoserine. This Shigella sonnei (strain Ss046) protein is Homoserine O-succinyltransferase.